The primary structure comprises 415 residues: Alditol oxidase (415 aa).

Residues 12-179 (ITYTAKEVHR…TALTLDLEPA (168 aa)) form the FAD-binding PCMH-type domain. His46 carries the post-translational modification Pros-8alpha-FAD histidine. Residues Ser106, Ser111, Gly114, 118 to 121 (TGTH), and Val169 contribute to the FAD site. Ser106 provides a ligand contact to xylitol. Xylitol-binding residues include Glu317, Arg319, and Thr342. Arg319 is an FAD binding site. His369 contacts FAD. Lys372 is a xylitol binding site.

This sequence belongs to the oxygen-dependent FAD-linked oxidoreductase family. Monomer. The cofactor is FAD.

The catalysed reaction is an alditol + O2 = an aldose + H2O2. It carries out the reaction xylitol + O2 = D-xylose + H2O2. The enzyme catalyses D-sorbitol + O2 = D-glucose + H2O2. Oxidase that performs selective oxidation of the terminal primary hydroxyl group of several alditols, with a reduction of O2 to H2O2. Shows highest activity on xylitol and D-sorbitol, and to a lesser extent, can also use galactitol, D-mannitol, and D-arabitol as substrates in vitro. Is not active on D-glucose, D-xylose, D-galactose, D-mannose, D-fructose, L-sorbose, L-fucose, myoinositol, glycerol, ethyl alcohol, and meso-erythritol. The chain is Alditol oxidase from Streptomyces sp. (strain IKD472 / FERM P-14339).